The primary structure comprises 636 residues: Sodium-dependent nutrient amino acid transporter 1 (636 aa).

The segment at 1-40 (MELKTMPQNGANNGNPQGNTSNNNNTNDSSNSNSNNNNKT) is disordered. The Cytoplasmic segment spans residues 1 to 50 (MELKTMPQNGANNGNPQGNTSNNNNTNDSSNSNSNNNNKTERTNWSNGLE). Low complexity predominate over residues 7 to 40 (PQNGANNGNPQGNTSNNNNTNDSSNSNSNNNNKT). Transmembrane regions (helical) follow at residues 51–71 (FLMSCISVSVGLGNIWRFPFT), 78–98 (GAFLIPYIIVLFMIGKPMYYL), and 131–151 (TICIISYYSSLLALTLYYLAV). The N-linked (GlcNAc...) asparagine glycan is linked to asparagine 184. 9 consecutive transmembrane segments (helical) span residues 225-245 (PDWKLTIALFVSWIVIFLVIM), 254-274 (AAYFLALFPYVVLFTLLGRAV), 303-323 (AVVQCFFSLAVGSGPIIMFSS), 337-357 (IVTTLDTLTSLLGGITIFAIL), 397-417 (LFSALFFFMLFVLGIGSIVAL), 436-456 (VALVTSICGFLMGLVYVTPGG), 469-489 (TYVVFILAIFELVGIAWIYGV), 511-531 (CWLIFTPIMMIVIFIYSMVTI), and 547-567 (VAGWLLFAIGASQFPLWGWWY).

Belongs to the sodium:neurotransmitter symporter (SNF) (TC 2.A.22) family.

Its subcellular location is the membrane. Functionally, unusual broad substrate spectrum amino acid:sodium cotransporter that promotes absorption of the D isomers of essential amino acids. Neutral amino acids are the preferred substrates, especially methionine and phenylalanine. This is Sodium-dependent nutrient amino acid transporter 1 from Drosophila grimshawi (Hawaiian fruit fly).